The primary structure comprises 256 residues: 1-(5-phosphoribosyl)-5-[(5-phosphoribosylamino)methylideneamino] imidazole-4-carboxamide isomerase (256 aa).

Asp8 (proton acceptor) is an active-site residue. The active-site Proton donor is Asp129.

The protein belongs to the HisA/HisF family.

The protein resides in the cytoplasm. It catalyses the reaction 1-(5-phospho-beta-D-ribosyl)-5-[(5-phospho-beta-D-ribosylamino)methylideneamino]imidazole-4-carboxamide = 5-[(5-phospho-1-deoxy-D-ribulos-1-ylimino)methylamino]-1-(5-phospho-beta-D-ribosyl)imidazole-4-carboxamide. It participates in amino-acid biosynthesis; L-histidine biosynthesis; L-histidine from 5-phospho-alpha-D-ribose 1-diphosphate: step 4/9. This chain is 1-(5-phosphoribosyl)-5-[(5-phosphoribosylamino)methylideneamino] imidazole-4-carboxamide isomerase, found in Syntrophobacter fumaroxidans (strain DSM 10017 / MPOB).